We begin with the raw amino-acid sequence, 274 residues long: Formamidopyrimidine-DNA glycosylase (274 aa).

Pro2 functions as the Schiff-base intermediate with DNA in the catalytic mechanism. The active-site Proton donor is the Glu3. Lys58 (proton donor; for beta-elimination activity) is an active-site residue. DNA contacts are provided by His91 and Arg110. The FPG-type zinc finger occupies 238-272 (QVYDKTGQECVRCGTIIEKIQLGGRGTHFCPNCQR). The active-site Proton donor; for delta-elimination activity is the Arg262.

The protein belongs to the FPG family. In terms of assembly, monomer. Zn(2+) serves as cofactor.

It carries out the reaction Hydrolysis of DNA containing ring-opened 7-methylguanine residues, releasing 2,6-diamino-4-hydroxy-5-(N-methyl)formamidopyrimidine.. The catalysed reaction is 2'-deoxyribonucleotide-(2'-deoxyribose 5'-phosphate)-2'-deoxyribonucleotide-DNA = a 3'-end 2'-deoxyribonucleotide-(2,3-dehydro-2,3-deoxyribose 5'-phosphate)-DNA + a 5'-end 5'-phospho-2'-deoxyribonucleoside-DNA + H(+). Its function is as follows. Involved in base excision repair of DNA damaged by oxidation or by mutagenic agents. Acts as a DNA glycosylase that recognizes and removes damaged bases. Has a preference for oxidized purines, such as 7,8-dihydro-8-oxoguanine (8-oxoG). Has AP (apurinic/apyrimidinic) lyase activity and introduces nicks in the DNA strand. Cleaves the DNA backbone by beta-delta elimination to generate a single-strand break at the site of the removed base with both 3'- and 5'-phosphates. This chain is Formamidopyrimidine-DNA glycosylase, found in Streptococcus pneumoniae serotype 4 (strain ATCC BAA-334 / TIGR4).